A 71-amino-acid chain; its full sequence is DNA-directed RNA polymerase subunit epsilon (71 aa).

It belongs to the RNA polymerase subunit epsilon family. As to quaternary structure, monomer. RNAP is composed of a core of 2 alpha, a beta and a beta' subunit. The core is associated with a delta subunit, and at least one of epsilon or omega. When a sigma factor is associated with the core the holoenzyme is formed, which can initiate transcription.

The enzyme catalyses RNA(n) + a ribonucleoside 5'-triphosphate = RNA(n+1) + diphosphate. In terms of biological role, a non-essential component of RNA polymerase (RNAP). Has a similar structure to bacteriophage T7 protein Gp2 (AC P03704), which is known to bind to RNAP in the DNA binding-cleft. Unlike Gp2 however, this protein does not inhibit transcription initiation. The chain is DNA-directed RNA polymerase subunit epsilon from Geobacillus stearothermophilus (strain DSM 13240 / CIP 106956 / 10).